Consider the following 690-residue polypeptide: Eukaryotic translation initiation factor 3 subunit B (690 aa).

Over residues 1 to 11 (MAKKKSEEHSG) the composition is skewed to basic and acidic residues. The disordered stretch occupies residues 1-36 (MAKKKSEEHSGADANDSDYQEEPNFEDPPGFVDNIS). Positions 15-25 (NDSDYQEEPNF) are enriched in acidic residues. An RRM domain is found at 57–141 (SVVVVDNIPK…HTFAVNLFTD (85 aa)). WD repeat units follow at residues 207-246 (TRER…KIQK), 293-331 (DGMS…LLDL), 334-369 (IKIP…TLME), 442-484 (EIRE…KPSL), and 530-575 (PDHF…IKRT). Residues 595-645 (EEKQKEIKKNLKKYYAAFEQKDRLRLTRASKELLEKRSQLRETFMEYRNKR) adopt a coiled-coil conformation.

It belongs to the eIF-3 subunit B family. In terms of assembly, component of the eukaryotic translation initiation factor 3 (eIF-3) complex. The eIF-3 complex interacts with pix. Interacts with mxt.

Its subcellular location is the cytoplasm. RNA-binding component of the eukaryotic translation initiation factor 3 (eIF-3) complex, which is involved in protein synthesis of a specialized repertoire of mRNAs and, together with other initiation factors, stimulates binding of mRNA and methionyl-tRNAi to the 40S ribosome. The eIF-3 complex specifically targets and initiates translation of a subset of mRNAs involved in cell proliferation. The chain is Eukaryotic translation initiation factor 3 subunit B from Drosophila erecta (Fruit fly).